A 105-amino-acid polypeptide reads, in one-letter code: Insulin (105 aa).

Positions 1 to 24 (MALWTRLRPLLALLALWPPPPARA) are cleaved as a signal peptide. Intrachain disulfides connect C31–C91, C43–C104, and C90–C95. A propeptide spans 57–82 (EVEGPQVGALELAGGPGAGGLEGPPQ) (c peptide).

It belongs to the insulin family. Heterodimer of a B chain and an A chain linked by two disulfide bonds.

It is found in the secreted. Insulin decreases blood glucose concentration. It increases cell permeability to monosaccharides, amino acids and fatty acids. It accelerates glycolysis, the pentose phosphate cycle, and glycogen synthesis in liver. This is Insulin (INS) from Bos taurus (Bovine).